Reading from the N-terminus, the 188-residue chain is Segregation and condensation protein B (188 aa).

This sequence belongs to the ScpB family. In terms of assembly, homodimer. Homodimerization may be required to stabilize the binding of ScpA to the Smc head domains. Component of a cohesin-like complex composed of ScpA, ScpB and the Smc homodimer, in which ScpA and ScpB bind to the head domain of Smc. The presence of the three proteins is required for the association of the complex with DNA.

Its subcellular location is the cytoplasm. In terms of biological role, participates in chromosomal partition during cell division. May act via the formation of a condensin-like complex containing Smc and ScpA that pull DNA away from mid-cell into both cell halves. The chain is Segregation and condensation protein B from Lactococcus lactis subsp. lactis (strain IL1403) (Streptococcus lactis).